We begin with the raw amino-acid sequence, 147 residues long: Holdfast attachment protein A (147 aa).

In terms of biological role, involved in attachment of the holdfast to the cell. The holdfast is a structure that allows the bacteria to firmly adheres to surfaces. The sequence is that of Holdfast attachment protein A (hfaA) from Caulobacter vibrioides (strain ATCC 19089 / CIP 103742 / CB 15) (Caulobacter crescentus).